The sequence spans 314 residues: D-alanine--D-alanine ligase (314 aa).

Positions 115–310 (KQVWQSVGLV…FNELVLEILA (196 aa)) constitute an ATP-grasp domain. 141–196 (LDSLGGQGFVKPAHEGSSIGMSVVSTAQELKAAYEKAAHYDAKVLVERRIVGREFT) provides a ligand contact to ATP. Mg(2+) contacts are provided by D264, E277, and N279.

The protein belongs to the D-alanine--D-alanine ligase family. Requires Mg(2+) as cofactor. It depends on Mn(2+) as a cofactor.

It localises to the cytoplasm. It catalyses the reaction 2 D-alanine + ATP = D-alanyl-D-alanine + ADP + phosphate + H(+). Its pathway is cell wall biogenesis; peptidoglycan biosynthesis. Cell wall formation. The sequence is that of D-alanine--D-alanine ligase from Saccharophagus degradans (strain 2-40 / ATCC 43961 / DSM 17024).